Consider the following 120-residue polypeptide: Large ribosomal subunit protein uL22 (120 aa).

The tract at residues 1 to 20 is disordered; it reads MFVNRRYTARGKNLPSSPKK.

Belongs to the universal ribosomal protein uL22 family. In terms of assembly, part of the 50S ribosomal subunit.

This protein binds specifically to 23S rRNA; its binding is stimulated by other ribosomal proteins, e.g. L4, L17, and L20. It is important during the early stages of 50S assembly. It makes multiple contacts with different domains of the 23S rRNA in the assembled 50S subunit and ribosome. Functionally, the globular domain of the protein is located near the polypeptide exit tunnel on the outside of the subunit, while an extended beta-hairpin is found that lines the wall of the exit tunnel in the center of the 70S ribosome. The protein is Large ribosomal subunit protein uL22 of Borrelia turicatae (strain 91E135).